Consider the following 238-residue polypeptide: MSSRSYKRVLLKLSGEALMGEDAFGINRSTIVRMTDEIAEVAALGVELAIVIGGGNIFRGVAPGAQGMDRATADYMGMMATIMNALALQDALKHKGVDTRVQSALNIDQVVEPYIRPKALRYLEEGKVVIFAAGTGNPFFTTDTAAALRGAEIGAEIVLKATKVDGIYSADPNKDPTATRYARISFDEAIVRRLEVMDATAFALCRDQKLPIKVFSINKFGALKRAVSGEDEGTLVHV.

An ATP-binding site is contributed by K12 to G15. A UMP-binding site is contributed by G54. Positions 55 and 59 each coordinate ATP. Residues D74 and T135 to T142 contribute to the UMP site. ATP contacts are provided by T162, Y168, and D171.

This sequence belongs to the UMP kinase family. As to quaternary structure, homohexamer.

Its subcellular location is the cytoplasm. It carries out the reaction UMP + ATP = UDP + ADP. The protein operates within pyrimidine metabolism; CTP biosynthesis via de novo pathway; UDP from UMP (UMPK route): step 1/1. Its activity is regulated as follows. Inhibited by UTP. Its function is as follows. Catalyzes the reversible phosphorylation of UMP to UDP. The sequence is that of Uridylate kinase from Bordetella parapertussis (strain 12822 / ATCC BAA-587 / NCTC 13253).